Reading from the N-terminus, the 808-residue chain is Phenylalanine--tRNA ligase beta subunit (808 aa).

The 110-residue stretch at Arg-40–Arg-149 folds into the tRNA-binding domain. The region spanning His-407 to Val-484 is the B5 domain. Mg(2+) is bound by residues Asp-462, Asp-468, Glu-471, and Glu-472. An FDX-ACB domain is found at Ser-716–Arg-808.

This sequence belongs to the phenylalanyl-tRNA synthetase beta subunit family. Type 1 subfamily. In terms of assembly, tetramer of two alpha and two beta subunits. It depends on Mg(2+) as a cofactor.

It is found in the cytoplasm. It catalyses the reaction tRNA(Phe) + L-phenylalanine + ATP = L-phenylalanyl-tRNA(Phe) + AMP + diphosphate + H(+). The chain is Phenylalanine--tRNA ligase beta subunit from Leptospira interrogans serogroup Icterohaemorrhagiae serovar Lai (strain 56601).